The sequence spans 125 residues: Small ribosomal subunit protein uS13 (125 aa).

The interval proline 97–serine 125 is disordered. Basic residues predominate over residues glutamine 101–serine 125.

Belongs to the universal ribosomal protein uS13 family. In terms of assembly, part of the 30S ribosomal subunit. Forms a loose heterodimer with protein S19. Forms two bridges to the 50S subunit in the 70S ribosome.

In terms of biological role, located at the top of the head of the 30S subunit, it contacts several helices of the 16S rRNA. In the 70S ribosome it contacts the 23S rRNA (bridge B1a) and protein L5 of the 50S subunit (bridge B1b), connecting the 2 subunits; these bridges are implicated in subunit movement. Contacts the tRNAs in the A and P-sites. In Thermotoga neapolitana (strain ATCC 49049 / DSM 4359 / NBRC 107923 / NS-E), this protein is Small ribosomal subunit protein uS13.